The sequence spans 525 residues: GMP synthase [glutamine-hydrolyzing] (525 aa).

A Glutamine amidotransferase type-1 domain is found at 9–207; the sequence is RILILDFGSQ…VRDICQCEAL (199 aa). The active-site Nucleophile is Cys-86. Residues His-181 and Glu-183 contribute to the active site. Positions 208-400 constitute a GMPS ATP-PPase domain; the sequence is WTPAKIIDDA…LGLPYDMLYR (193 aa). 235 to 241 serves as a coordination point for ATP; sequence SGGVDSS.

In terms of assembly, homodimer.

It carries out the reaction XMP + L-glutamine + ATP + H2O = GMP + L-glutamate + AMP + diphosphate + 2 H(+). The protein operates within purine metabolism; GMP biosynthesis; GMP from XMP (L-Gln route): step 1/1. In terms of biological role, catalyzes the synthesis of GMP from XMP. This chain is GMP synthase [glutamine-hydrolyzing], found in Salmonella arizonae (strain ATCC BAA-731 / CDC346-86 / RSK2980).